Reading from the N-terminus, the 905-residue chain is Probable cation-transporting ATPase F (905 aa).

Transmembrane regions (helical) follow at residues 84 to 104 (EFVD…VGFI), 248 to 268 (FSKF…GVGL), and 283 to 303 (ALAV…TLAI). The active-site 4-aspartylphosphate intermediate is the aspartate 333. Mg(2+) is bound by residues aspartate 643 and aspartate 647. Transmembrane regions (helical) follow at residues 716 to 736 (ILAA…ILWI), 738 to 758 (MTTA…AGIM), 778 to 798 (TLLV…WELD), 808 to 828 (TAAL…CRSL), 842 to 862 (WIIL…YLPA), and 872 to 892 (IDIG…IVVA).

This sequence belongs to the cation transport ATPase (P-type) (TC 3.A.3) family. Type IIA subfamily.

The protein localises to the cell membrane. It carries out the reaction ATP + H2O = ADP + phosphate + H(+). The sequence is that of Probable cation-transporting ATPase F (ctpF) from Mycobacterium bovis (strain ATCC BAA-935 / AF2122/97).